We begin with the raw amino-acid sequence, 100 residues long: Noncompact myelin-associated protein (100 aa).

Residues methionine 1–glycine 28 are Extracellular-facing. A helical transmembrane segment spans residues alanine 29–leucine 49. At lysine 50–arginine 100 the chain is on the cytoplasmic side. Residues threonine 58–arginine 100 form a disordered region.

Glycosylated. In terms of tissue distribution, found in the peripheral nervous system (PNS) Schwann cells (at protein level). Expressed in the PNS, primarily limited to Schwann cells.

It is found in the cell membrane. Plays a role in myelin formation. This Mus musculus (Mouse) protein is Noncompact myelin-associated protein (Ncmap).